Consider the following 60-residue polypeptide: uncharacterized protein (60 aa).

This is an uncharacterized protein from Enterobacteria phage T4 (Bacteriophage T4).